The following is a 114-amino-acid chain: uncharacterized protein (114 aa).

The helical transmembrane segment at 13 to 30 (LYISAAGIASIYVVKTIV) threads the bilayer.

It is found in the mitochondrion outer membrane. This is an uncharacterized protein from Saccharomyces cerevisiae (strain ATCC 204508 / S288c) (Baker's yeast).